Consider the following 299-residue polypeptide: Lathosterol oxidase (299 aa).

3 helical membrane passes run 32–52 (ISLL…CATL), 79–99 (FTVQ…LLEI), and 117–137 (FELV…IYWI). A Fatty acid hydroxylase domain is found at 124 to 252 (ISFLFFTDMF…YFTLWDRIGG (129 aa)). The Histidine box-1 motif lies at 138 to 143 (HRGLHH). Positions 151–155 (HKPHH) match the Histidine box-2 motif. Residues 186 to 206 (IFPLHKVVYLSLYILVNIWTI) form a helical membrane-spanning segment. A Histidine box-3 motif is present at residues 228–233 (HHTDHH). The residue at position 253 (Ser253) is a Phosphoserine. Residues 274-299 (EGKRSSHSGNGCKNEKLFNGEFTKTE) form a disordered region. Residues 286–299 (KNEKLFNGEFTKTE) are compositionally biased toward basic and acidic residues.

The protein belongs to the sterol desaturase family. Fe cation is required as a cofactor.

Its subcellular location is the endoplasmic reticulum membrane. The catalysed reaction is a Delta(7)-sterol + 2 Fe(II)-[cytochrome b5] + O2 + 2 H(+) = a Delta(5),Delta(7)-sterol + 2 Fe(III)-[cytochrome b5] + 2 H2O. It catalyses the reaction lathosterol + 2 Fe(II)-[cytochrome b5] + O2 + 2 H(+) = 7-dehydrocholesterol + 2 Fe(III)-[cytochrome b5] + 2 H2O. The enzyme catalyses 5alpha-cholesta-7,24-dien-3beta-ol + 2 Fe(II)-[cytochrome b5] + O2 + 2 H(+) = 7-dehydrodesmosterol + 2 Fe(III)-[cytochrome b5] + 2 H2O. The protein operates within steroid biosynthesis; cholesterol biosynthesis. Its function is as follows. Catalyzes the penultimate step of the biosynthesis of cholesterol, the dehydrogenation of lathosterol into 7-dehydrocholesterol (7-DHC). Cholesterol is the major sterol component in mammalian membranes and a precursor for bile acid and steroid hormone synthesis. In addition to its essential role in cholesterol biosynthesis, it also indirectly regulates ferroptosis through the production of 7-DHC. By diverting the spread of damage caused by peroxyl radicals from the phospholipid components to its sterol nucleus, 7-DHC prevents this form of cell death. The protein is Lathosterol oxidase of Homo sapiens (Human).